The primary structure comprises 685 residues: Phenoloxidase subunit 1 (685 aa).

A propeptide spanning residues 1–51 (MSDAKNNLLLFFDRPSEPCFMQKGEENAVFEIPDNYYPEKYQRVSNAIGNR) is cleaved from the precursor. N-linked (GlcNAc...) asparagine glycosylation is present at Asn184. 3 residues coordinate Cu cation: His209, His213, and His239. Asn254 and Asn324 each carry an N-linked (GlcNAc...) asparagine glycan. Glu351 serves as the catalytic Proton acceptor. 3 residues coordinate Cu cation: His366, His370, and His406. N-linked (GlcNAc...) asparagine glycosylation is found at Asn491 and Asn540. Disulfide bonds link Cys581/Cys623 and Cys583/Cys630.

In terms of assembly, heterodimer. It depends on Cu(2+) as a cofactor. In terms of processing, the N-terminus is blocked. Synthesized by hemocytes and released into the hemolymph plasma.

Its subcellular location is the secreted. The enzyme catalyses 2 L-dopa + O2 = 2 L-dopaquinone + 2 H2O. It catalyses the reaction L-tyrosine + O2 = L-dopaquinone + H2O. Its function is as follows. This is a copper-containing oxidase that functions in the formation of pigments such as melanins and other polyphenolic compounds. Catalyzes the rate-limiting conversions of tyrosine to DOPA, DOPA to DOPA-quinone and possibly 5,6 dihydroxyindole to indole-5'6 quinone. The polypeptide is Phenoloxidase subunit 1 (Bombyx mori (Silk moth)).